The chain runs to 509 residues: Cobyric acid synthase (509 aa).

The GATase cobBQ-type domain maps to 262–459 (EIKVGIIKLP…IHGIFENDSW (198 aa)). Residue Cys343 is the Nucleophile of the active site. Residue His451 is part of the active site.

It belongs to the CobB/CobQ family. CobQ subfamily.

It functions in the pathway cofactor biosynthesis; adenosylcobalamin biosynthesis. Its function is as follows. Catalyzes amidations at positions B, D, E, and G on adenosylcobyrinic A,C-diamide. NH(2) groups are provided by glutamine, and one molecule of ATP is hydrogenolyzed for each amidation. The protein is Cobyric acid synthase of Prochlorococcus marinus (strain MIT 9301).